A 149-amino-acid polypeptide reads, in one-letter code: Macrodomain Ter protein (149 aa).

Belongs to the MatP family. In terms of assembly, homodimer.

It is found in the cytoplasm. Its function is as follows. Required for spatial organization of the terminus region of the chromosome (Ter macrodomain) during the cell cycle. Prevents early segregation of duplicated Ter macrodomains during cell division. Binds specifically to matS, which is a 13 bp signature motif repeated within the Ter macrodomain. This chain is Macrodomain Ter protein, found in Vibrio cholerae serotype O1 (strain ATCC 39315 / El Tor Inaba N16961).